The primary structure comprises 324 residues: COP9 signalosome complex subunit 6 (324 aa).

The MPN domain occupies 38–171; that stretch reads VALHPLVILN…VSVFESVIDI (134 aa).

It belongs to the peptidase M67A family. CSN6 subfamily. As to quaternary structure, component of the CSN complex, composed of COPS1/GPS1, COPS2, COPS3, COPS4, COPS5, COPS6, COPS7 (COPS7A or COPS7B), COPS8 and COPS9. In the complex, it probably interacts directly with COPS2, COPS4, COPS5, COPS7 (COPS7A or COPS7B) and COPS9. Interacts with the translation initiation factor EIF3S6. Interacts weakly with RBX1. Directly interacts with COP1 and 14-3-3 protein sigma/SFN. Interacts with ERCC6.

Its subcellular location is the cytoplasm. It is found in the nucleus. Component of the COP9 signalosome complex (CSN), a complex involved in various cellular and developmental processes. The CSN complex is an essential regulator of the ubiquitin (Ubl) conjugation pathway by mediating the deneddylation of the cullin subunits of SCF-type E3 ligase complexes, leading to decrease the Ubl ligase activity of SCF-type complexes such as SCF, CSA or DDB2. The complex is also involved in phosphorylation of p53/TP53, c-jun/JUN, IkappaBalpha/NFKBIA, ITPK1 and IRF8, possibly via its association with CK2 and PKD kinases. CSN-dependent phosphorylation of TP53 and JUN promotes and protects degradation by the Ubl system, respectively. Has some glucocorticoid receptor-responsive activity. Stabilizes COP1 through reducing COP1 auto-ubiquitination and decelerating COP1 turnover rate, hence regulates the ubiquitination of COP1 targets, including SFN. The chain is COP9 signalosome complex subunit 6 (COPS6) from Bos taurus (Bovine).